The following is a 287-amino-acid chain: MISNVLKRASVLARSNGIQSAFYTTTAKTEASSSPQMKIKTAEKKDHFVNFQVYRYNEETTAKPYIQTYNINLKDCGPMVLDALLLIKNNIDPTLSFRRSCREGICGSCAMNLNGSNTLACTKKITDCLSGDTVKVYPLPHMHVVRDLIPDLSHFYTQHKSIKPWLEPAVDVPRYNGKEILQSKENRHKLDGLYECILCACCSTSCPSYWWSEGGDGGYLGPAVLLQAYRWIADSRDSIQKDRLAILSEDQMKVYKCHTIMNCTAVCPKGLNPGKSIANIKYLLAHN.

Residues 1-23 constitute a mitochondrion transit peptide; it reads MISNVLKRASVLARSNGIQSAFY. The 90-residue stretch at 51 to 140 folds into the 2Fe-2S ferredoxin-type domain; that stretch reads FQVYRYNEET…GDTVKVYPLP (90 aa). Residues C101, C106, C109, and C121 each coordinate [2Fe-2S] cluster. Positions 186–216 constitute a 4Fe-4S ferredoxin-type domain; it reads NRHKLDGLYECILCACCSTSCPSYWWSEGGD. [4Fe-4S] cluster-binding residues include C196, C199, and C202. C206 serves as a coordination point for [3Fe-4S] cluster. W211 lines the a ubiquinone pocket. 2 residues coordinate [3Fe-4S] cluster: C257 and C263. C267 lines the [4Fe-4S] cluster pocket.

It belongs to the succinate dehydrogenase/fumarate reductase iron-sulfur protein family. In terms of assembly, component of complex II composed of four subunits: the flavoprotein (FP) SDHA, iron-sulfur protein (IP) SDHB, and a cytochrome b composed of a large and a small subunit. [2Fe-2S] cluster serves as cofactor. It depends on [3Fe-4S] cluster as a cofactor. The cofactor is [4Fe-4S] cluster.

The protein localises to the mitochondrion inner membrane. It carries out the reaction a quinone + succinate = fumarate + a quinol. The protein operates within carbohydrate metabolism; tricarboxylic acid cycle; fumarate from succinate (eukaryal route): step 1/1. Iron-sulfur protein (IP) subunit of succinate dehydrogenase (SDH) that is involved in complex II of the mitochondrial electron transport chain and is responsible for transferring electrons from succinate to ubiquinone (coenzyme Q). This Dictyostelium discoideum (Social amoeba) protein is Succinate dehydrogenase [ubiquinone] iron-sulfur subunit, mitochondrial (sdhB).